The chain runs to 108 residues: ATP-dependent Clp protease adapter protein ClpS (108 aa).

It belongs to the ClpS family. As to quaternary structure, binds to the N-terminal domain of the chaperone ClpA.

In terms of biological role, involved in the modulation of the specificity of the ClpAP-mediated ATP-dependent protein degradation. The protein is ATP-dependent Clp protease adapter protein ClpS of Cupriavidus necator (strain ATCC 17699 / DSM 428 / KCTC 22496 / NCIMB 10442 / H16 / Stanier 337) (Ralstonia eutropha).